A 474-amino-acid polypeptide reads, in one-letter code: Coronin-1C (474 aa).

WD repeat units follow at residues 78-118 (GHTG…LTLS), 128-168 (GHSK…ALIN), 172-202 (MHSD…RVID), 215-249 (AHEG…ALWN), and 263-303 (DTSN…PYVH). Residues 435–474 (VQNEAKLDEILKEIKSIKETICSQDERISKLEQQLAKMAA) adopt a coiled-coil conformation. An N6-acetyllysine modification is found at Lys-446.

It belongs to the WD repeat coronin family. Homotrimer. Binds F-actin. Interacts with RCC2. Interacts preferentially with nucleotide-free and GDP-bound RAC1. Interacts with VIM (via head domain). Interacts with MICAL2; this interaction recruits MICAL2 to the actin filaments. Detected in skeletal muscle (at protein level). Detected in fibroblasts (at protein level). Ubiquitous.

Its subcellular location is the cell membrane. It is found in the cell projection. The protein resides in the lamellipodium. It localises to the ruffle membrane. The protein localises to the cytoplasm. Its subcellular location is the cytoskeleton. It is found in the cell cortex. The protein resides in the endosome membrane. Plays a role in directed cell migration by regulating the activation and subcellular location of RAC1. Increases the presence of activated RAC1 at the leading edge of migrating cells. Required for normal organization of the cytoskeleton, including the actin cytoskeleton, microtubules and the vimentin intermediate filaments. Required for normal cell proliferation, cell migration, and normal formation of lamellipodia. Plays a role in endoplasmic reticulum-associated endosome fission: localizes to endosome membrane tubules and promotes recruitment of TMCC1, leading to recruitment of the endoplasmic reticulum to endosome tubules for fission. Endosome membrane fission of early and late endosomes is essential to separate regions destined for lysosomal degradation from carriers to be recycled to the plasma membrane. Required for normal distribution of mitochondria within cells. This is Coronin-1C (Coro1c) from Mus musculus (Mouse).